The primary structure comprises 207 residues: ATP-dependent Clp protease proteolytic subunit (207 aa).

Ser-111 serves as the catalytic Nucleophile. His-136 is an active-site residue.

The protein belongs to the peptidase S14 family. Fourteen ClpP subunits assemble into 2 heptameric rings which stack back to back to give a disk-like structure with a central cavity, resembling the structure of eukaryotic proteasomes.

It localises to the cytoplasm. It catalyses the reaction Hydrolysis of proteins to small peptides in the presence of ATP and magnesium. alpha-casein is the usual test substrate. In the absence of ATP, only oligopeptides shorter than five residues are hydrolyzed (such as succinyl-Leu-Tyr-|-NHMec, and Leu-Tyr-Leu-|-Tyr-Trp, in which cleavage of the -Tyr-|-Leu- and -Tyr-|-Trp bonds also occurs).. Its function is as follows. Cleaves peptides in various proteins in a process that requires ATP hydrolysis. Has a chymotrypsin-like activity. Plays a major role in the degradation of misfolded proteins. The chain is ATP-dependent Clp protease proteolytic subunit from Aliivibrio fischeri (strain ATCC 700601 / ES114) (Vibrio fischeri).